Reading from the N-terminus, the 155-residue chain is Protein-export protein SecB (155 aa).

This sequence belongs to the SecB family. Homotetramer, a dimer of dimers. One homotetramer interacts with 1 SecA dimer.

It localises to the cytoplasm. Its function is as follows. One of the proteins required for the normal export of preproteins out of the cell cytoplasm. It is a molecular chaperone that binds to a subset of precursor proteins, maintaining them in a translocation-competent state. It also specifically binds to its receptor SecA. This is Protein-export protein SecB from Shigella sonnei (strain Ss046).